The following is a 261-amino-acid chain: Glucosamine-6-phosphate deaminase (261 aa).

D67 functions as the Proton acceptor; for enolization step in the catalytic mechanism. Residue N135 is the For ring-opening step of the active site. H137 acts as the Proton acceptor; for ring-opening step in catalysis. Catalysis depends on E142, which acts as the For ring-opening step.

The protein belongs to the glucosamine/galactosamine-6-phosphate isomerase family. NagB subfamily. In terms of assembly, homohexamer.

The catalysed reaction is alpha-D-glucosamine 6-phosphate + H2O = beta-D-fructose 6-phosphate + NH4(+). It functions in the pathway amino-sugar metabolism; N-acetylneuraminate degradation; D-fructose 6-phosphate from N-acetylneuraminate: step 5/5. Its function is as follows. Catalyzes the reversible isomerization-deamination of glucosamine 6-phosphate (GlcN6P) to form fructose 6-phosphate (Fru6P) and ammonium ion. In Hahella chejuensis (strain KCTC 2396), this protein is Glucosamine-6-phosphate deaminase.